The sequence spans 398 residues: Bifunctional enzyme IspD/IspF (398 aa).

The segment at 1 to 234 (MANSRRTAAI…SRLAALLGDI (234 aa)) is 2-C-methyl-D-erythritol 4-phosphate cytidylyltransferase. The interval 235-398 (RTGTGYDVHA…LPWGPNGLSG (164 aa)) is 2-C-methyl-D-erythritol 2,4-cyclodiphosphate synthase. A divalent metal cation contacts are provided by Asp-241 and His-243. Residues 241–243 (DVH) and 267–268 (HS) contribute to the 4-CDP-2-C-methyl-D-erythritol 2-phosphate site. Residue His-275 coordinates a divalent metal cation. 4-CDP-2-C-methyl-D-erythritol 2-phosphate-binding positions include 289-291 (DIG), 365-368 (TTSE), Phe-372, and Arg-375.

It in the N-terminal section; belongs to the IspD/TarI cytidylyltransferase family. IspD subfamily. The protein in the C-terminal section; belongs to the IspF family. A divalent metal cation is required as a cofactor.

It carries out the reaction 2-C-methyl-D-erythritol 4-phosphate + CTP + H(+) = 4-CDP-2-C-methyl-D-erythritol + diphosphate. The enzyme catalyses 4-CDP-2-C-methyl-D-erythritol 2-phosphate = 2-C-methyl-D-erythritol 2,4-cyclic diphosphate + CMP. The protein operates within isoprenoid biosynthesis; isopentenyl diphosphate biosynthesis via DXP pathway; isopentenyl diphosphate from 1-deoxy-D-xylulose 5-phosphate: step 2/6. It participates in isoprenoid biosynthesis; isopentenyl diphosphate biosynthesis via DXP pathway; isopentenyl diphosphate from 1-deoxy-D-xylulose 5-phosphate: step 4/6. Its function is as follows. Bifunctional enzyme that catalyzes the formation of 4-diphosphocytidyl-2-C-methyl-D-erythritol from CTP and 2-C-methyl-D-erythritol 4-phosphate (MEP) (IspD), and catalyzes the conversion of 4-diphosphocytidyl-2-C-methyl-D-erythritol 2-phosphate (CDP-ME2P) to 2-C-methyl-D-erythritol 2,4-cyclodiphosphate (ME-CPP) with a corresponding release of cytidine 5-monophosphate (CMP) (IspF). In Rhodopseudomonas palustris (strain BisA53), this protein is Bifunctional enzyme IspD/IspF.